The primary structure comprises 521 residues: Nitric oxide reductase transcription regulator NorR2 (521 aa).

Aspartate 56 is subject to 4-aspartylphosphate. The Sigma-54 factor interaction domain maps to 193 to 422; the sequence is IIGQSEAIAN…LEHVISRAAL (230 aa). Residues 221 to 228 and 293 to 302 each bind ATP; these read GETGVGKE and EVGELPLAIQ. A DNA-binding region (H-T-H motif) is located at residues 497–516; sequence WAQAARQLGIDASNLHKLAR.

It participates in nitrogen metabolism; nitrate reduction (denitrification) [regulation]. Functionally, required for the nitric oxide (NO) induced expression of NO reductase. Not required for expression of 2 other pathway members, nitrate reductase (nirS) and nitrous oxide reductase (nosZ). The polypeptide is Nitric oxide reductase transcription regulator NorR2 (norR2) (Cupriavidus necator (strain ATCC 17699 / DSM 428 / KCTC 22496 / NCIMB 10442 / H16 / Stanier 337) (Ralstonia eutropha)).